The sequence spans 2799 residues: E3 ubiquitin-protein ligase UBR5 (2799 aa).

Position 2 is an N-acetylthreonine (Thr2). Residues 77-88 (DRLELGKPDNND) show a composition bias toward basic and acidic residues. A disordered region spans residues 77 to 175 (DRLELGKPDN…DRGSGLLGSQ (99 aa)). Residues 89–110 (GSKLNSNSGAGRTSRPGRTSDS) show a composition bias toward polar residues. Phosphoserine is present on Ser110. The span at 135-144 (GVGGSGGGSS) shows a compositional bias: gly residues. Residues 184-226 (VIPEELISQAQVVLQGKSRSVIIRELQRTNLDVNLAVNNLLSR) enclose the UBA domain. Ser327 bears the Phosphoserine mark. Positions 328 to 347 (FDNERGSTSKEGEPNLDKKN) are enriched in basic and acidic residues. Positions 328 to 352 (FDNERGSTSKEGEPNLDKKNTPVQS) are disordered. Phosphoserine is present on residues Ser352 and Ser578. The tract at residues 579 to 648 (PESLKNMEKA…APKEEEKVNE (70 aa)) is disordered. The segment covering 583–604 (KNMEKASKTTEAKPESKQEPVK) has biased composition (basic and acidic residues). Ser612 carries the post-translational modification Phosphoserine. Low complexity predominate over residues 614–628 (ASTCSDASSIASSAS). Position 637 is a phosphothreonine (Thr637). Phosphoserine is present on residues Ser808, Ser928, and Ser1018. Disordered stretches follow at residues 999–1031 (AGLG…PDPP) and 1052–1075 (TAAT…EPSV). The span at 1017–1031 (VSPPIAPPSWVPDPP) shows a compositional bias: pro residues. A compositionally biased stretch (polar residues) spans 1052–1073 (TAATGTGQGPSTSTIPGPSTEP). A phosphothreonine mark is found at Thr1115 and Thr1135. The UBR-type zinc finger occupies 1177–1245 (DTCSFTWTGA…EKCKCKTLIA (69 aa)). Positions 1179, 1196, 1199, 1208, 1211, 1215, 1216, and 1219 each coordinate Zn(2+). At Ser1227 the chain carries Phosphoserine. Zn(2+) is bound by residues Cys1232, Cys1234, and Cys1240. Positions 1299–1318 (REDRNRKTASPEDSDMPDHD) are disordered. Phosphoserine is present on residues Ser1308, Ser1355, Ser1375, and Ser1481. The tract at residues 1515–1740 (SVEPLPPRPS…PSSTSTPAAS (226 aa)) is disordered. Residues 1524 to 1537 (SSDQSSSSSQSQSS) show a composition bias toward low complexity. The segment covering 1538 to 1553 (YIIRNPQQRRISQSQP) has biased composition (polar residues). The residue at position 1549 (Ser1549) is a Phosphoserine. 2 stretches are compositionally biased toward acidic residues: residues 1559 to 1574 (EEQD…EVEV) and 1605 to 1614 (HDEDGSDMEL). The segment covering 1629 to 1638 (NHSNQDNASG) has biased composition (polar residues). Composition is skewed to low complexity over residues 1641–1657 (SVVT…ASSV), 1668–1681 (SNDS…SSQS), and 1726–1740 (AAST…PAAS). Thr1736 bears the Phosphothreonine mark. The residue at position 1741 (Ser1741) is a Phosphoserine. A Phosphotyrosine modification is found at Tyr1746. Residue Ser1780 is modified to Phosphoserine. The tract at residues 1859–1890 (LASAGDPGHPNHPLHASQNSARRERMTAREEA) is disordered. Over residues 1879-1890 (ARRERMTAREEA) the composition is skewed to basic and acidic residues. Thr1969 bears the Phosphothreonine mark. Residues 1984 to 2021 (GIDNEDSEHENDDDTNQSATLNDKDDDSLPAETGQNHP) form a disordered region. Acidic residues predominate over residues 1985–1998 (IDNEDSEHENDDDT). Phosphoserine is present on residues Ser1990, Ser2026, and Ser2028. Thr2030 is subject to Phosphothreonine. Ser2076 bears the Phosphoserine mark. A disordered region spans residues 2117-2142 (RQKKEGEEQPVLPEETESSKPGPSAH). Phosphothreonine is present on Thr2213. Residues Ser2241 and Ser2289 each carry the phosphoserine modification. Residues 2323-2392 (HTSLMQRLRN…PSDDPEPLPA (70 aa)) form a disordered region. 2 stretches are compositionally biased toward basic and acidic residues: residues 2332-2348 (NRGE…EMRR) and 2356-2368 (SRRD…RRQL). The 78-residue stretch at 2377-2454 (PASEGNPSDD…AMELIIAHGR (78 aa)) folds into the PABC domain. An HECT domain is found at 2462 to 2799 (LDLGLVDSSE…AIKTKNFGFV (338 aa)). A phosphoserine mark is found at Ser2469, Ser2484, and Ser2486. Residues 2473 to 2493 (VQQENRKRHGSSRSVVDMDLD) form a disordered region. Cys2768 functions as the Glycyl thioester intermediate in the catalytic mechanism.

The protein belongs to the UBR5 family. As to quaternary structure, homotetramer; composed of a dimer of dimers. Associates with CDK9 and TFIIS/TCEA1 and forms a transcription regulatory complex made of CDK9, RNAP II, UBR5 and TFIIS/TCEA1 that can stimulate target gene transcription (e.g. gamma fibrinogen/FGG) by recruiting their promoters. Associates with the E3 ligase complex containing DYRK2, EDD/UBR5, DDB1 and DCAF1 proteins (EDVP complex). Binds TOPBP1. Interacts with PIH1D1. Interacts with CIB1. (Microbial infection) Interacts with human T-cell leukemia virus 1/HTLV-1 protein HBZ; this interaction modulates HBZ stability. As to expression, widely expressed. Most abundant in testis and expressed at high levels in brain, pituitary and kidney.

The protein resides in the nucleus. The protein localises to the cytoplasm. It carries out the reaction S-ubiquitinyl-[E2 ubiquitin-conjugating enzyme]-L-cysteine + [acceptor protein]-L-lysine = [E2 ubiquitin-conjugating enzyme]-L-cysteine + N(6)-ubiquitinyl-[acceptor protein]-L-lysine.. It functions in the pathway protein modification; protein ubiquitination. In terms of biological role, E3 ubiquitin-protein ligase involved in different protein quality control pathways in the cytoplasm and nucleus. Mainly acts as a ubiquitin chain elongator that extends pre-ubiquitinated substrates. Component of the N-end rule pathway: ubiquitinates proteins bearing specific N-terminal residues that are destabilizing according to the N-end rule, leading to their degradation. Recognizes type-1 N-degrons, containing positively charged amino acids (Arg, Lys and His). Together with UBR4, part of a cytoplasm protein quality control pathway that prevents protein aggregation by catalyzing assembly of heterotypic 'Lys-11'-/'Lys-48'-linked branched ubiquitin chains on aggregated proteins, leading to substrate recognition by the segregase p97/VCP and degradation by the proteasome: UBR5 is probably branching multiple 'Lys-48'-linked chains of substrates initially modified with mixed conjugates by UBR4. Together with ITCH, catalyzes 'Lys-48'-/'Lys-63'-branched ubiquitination of TXNIP, leading to its degradation: UBR5 mediates branching of 'Lys-48'-linked chains of substrates initially modified with 'Lys-63'-linked conjugates by ITCH. Catalytic component of a nuclear protein quality control pathway that mediates ubiquitination and degradation of unpaired transcription factors (i.e. transcription factors that are not assembled into functional multiprotein complexes): specifically recognizes and binds degrons that are not accessible when transcription regulators are associated with their coactivators. Ubiquitinates various unpaired transcription regulator (MYC, SUPT4H1, SUPT5H, CDC20 and MCRS1), as well as ligand-bound nuclear receptors (ESR1, NR1H3, NR3C1, PGR, RARA, RXRA AND VDR) that are not associated with their nuclear receptor coactivators (NCOAs). Involved in maturation and/or transcriptional regulation of mRNA by mediating polyubiquitination and activation of CDK9. Also acts as a regulator of DNA damage response by acting as a suppressor of RNF168, an E3 ubiquitin-protein ligase that promotes accumulation of 'Lys-63'-linked histone H2A and H2AX at DNA damage sites, thereby acting as a guard against excessive spreading of ubiquitinated chromatin at damaged chromosomes. Regulates DNA topoisomerase II binding protein (TopBP1) in the DNA damage response. Ubiquitinates acetylated PCK1. Acts as a positive regulator of the canonical Wnt signaling pathway by mediating (1) ubiquitination and stabilization of CTNNB1, and (2) 'Lys-48'-linked ubiquitination and degradation of TLE3. Promotes disassembly of the mitotic checkpoint complex (MCC) from the APC/C complex by catalyzing ubiquitination of BUB1B, BUB3 and CDC20. Plays an essential role in extraembryonic development. Required for the maintenance of skeletal tissue homeostasis by acting as an inhibitor of hedgehog (HH) signaling. The sequence is that of E3 ubiquitin-protein ligase UBR5 (UBR5) from Homo sapiens (Human).